Consider the following 404-residue polypeptide: MLFSKSLVALVACFLPLIVSATELKLRNAAATNVAADSYIVVYKDIDDSTFESEMFNVHSFLSKRDSTFRGLGHKYKMPKFKGYQIESDMDTVNRISQSPHVAYVDKDVKVSAYDLSVRIGAPWGLDRISHRNGTSPGLEEYTYDSSAGGGTTIYIIDTGVYIEHVEFEGRATFGANFIPGSPDTDEDGHGTHVAGIAAGANFGVASKAKIIAVRVLDANGDGKGSNVLAGMQWAADDAGKKNQTAKSVINMSLGADYSEAFNKATEAIIAKGIVVVAAAGNEDANASGVSPASTVDAITVGATDRNDSRAAFSNWGVALDVFAPGVDILSAWIGGKDANKTISGTSMACPHVAGLAAYFIGLEKNGTSTPSKIATKIKGVATKNVVLHPKNSRDNLAYNDDGY.

A signal peptide spans M1–S20. The propeptide occupies A21–Y114. The region spanning S38 to S112 is the Inhibitor I9 domain. The Peptidase S8 domain maps to P123–Y404. N133 is a glycosylation site (N-linked (GlcNAc...) asparagine). Catalysis depends on charge relay system residues D158 and H190. N-linked (GlcNAc...) asparagine glycosylation is found at N243, N251, N286, N307, and N340. The active-site Charge relay system is the S347. N366 carries N-linked (GlcNAc...) asparagine glycosylation.

The protein belongs to the peptidase S8 family.

It localises to the secreted. In terms of biological role, secreted subtilisin-like serine endopeptidase. Mediates the degradation of collagen, the major structural protein in the mammalian host. Degrades the nonhelical regions of collagen that function in the cross-linking of the helical components. May function as virulence factor involved in epidermal wing necrosis observed in white nose syndrome (WNS) in bats. The protein is Subtilisin-like protease 3 of Pseudogymnoascus destructans (strain ATCC MYA-4855 / 20631-21) (Bat white-nose syndrome fungus).